The sequence spans 169 residues: GSK-3-binding protein (169 aa).

Positions 75–100 are disordered; sequence TPRGAARHAQHHHHHSPRQQGTGGNK. The segment covering 79 to 91 has biased composition (basic residues); the sequence is AARHAQHHHHHSP. Residues 122-145 are involved in GSK-3 binding; the sequence is DDPHELLQELLLSGNLIKEAVRRL. The interval 147–169 is disordered; the sequence is MAGESPDPPGSRRVSECTETTVQ.

This sequence belongs to the GSK-3-binding protein family.

Its function is as follows. Binds GSK-3 and prevents GSK-3-dependent phosphorylation. Regulates the stability of beta-catenin in embryos. Maternal GBP is required for dorsal-ventral axis formation. The polypeptide is GSK-3-binding protein (gbp) (Xenopus laevis (African clawed frog)).